The following is a 508-amino-acid chain: Probable G-protein coupled receptor 101 (508 aa).

At 1–35 the chain is on the extracellular side; it reads MTSTCTNSTRESNSSHTCMPLSKMPISLAHGIIRS. Residues N7 and N13 are each glycosylated (N-linked (GlcNAc...) asparagine). Residues 36-56 form a helical membrane-spanning segment; it reads TVLVIFLAASFVGNIVLALVL. The Cytoplasmic portion of the chain corresponds to 57–68; it reads QRKPQLLQVTNR. A helical membrane pass occupies residues 69 to 89; the sequence is FIFNLLVTDLLQISLVAPWVV. Over 90 to 106 the chain is Extracellular; sequence ATSVPLFWPLNSHFCTA. The cysteines at positions 104 and 182 are disulfide-linked. A helical membrane pass occupies residues 107-127; that stretch reads LVSLTHLFAFASVNTIVVVSV. The Cytoplasmic portion of the chain corresponds to 128-149; that stretch reads DRYLSIIHPLSYPSKMTQRRGY. A helical transmembrane segment spans residues 150-170; the sequence is LLLYGTWIVAILQSTPPLYGW. At 171–196 the chain is on the extracellular side; sequence GQAAFDERNALCSMIWGASPSYTILS. Residues 197 to 217 form a helical membrane-spanning segment; the sequence is VVSFIVIPLIVMIACYSVVFC. Residues 218–399 lie on the Cytoplasmic side of the membrane; it reads AARRQHALLY…PRCYQCKAAK (182 aa). Residues 244–338 are disordered; it reads NEDEEGAEKK…ENSMKADKGR (95 aa). Basic and acidic residues-rich tracts occupy residues 250–288 and 318–338; these read AEKK…KAKE and MEGK…DKGR. The chain crosses the membrane as a helical span at residues 400 to 420; that stretch reads VIFIIIFSYVLSLGPYCFLAV. The Extracellular portion of the chain corresponds to 421 to 433; sequence LAVWVDVETQVPQ. A helical membrane pass occupies residues 434 to 454; it reads WVITIIIWLFFLQCCIHPYVY. Residues 455–508 lie on the Cytoplasmic side of the membrane; sequence GYMHKTIKKEIQDMLKKFFCKEKPPKEDSHPDLPGTEGGTEGKIVPSYDSATFP. Positions 476-485 are enriched in basic and acidic residues; that stretch reads EKPPKEDSHP. The interval 476–508 is disordered; that stretch reads EKPPKEDSHPDLPGTEGGTEGKIVPSYDSATFP.

It belongs to the G-protein coupled receptor 1 family.

The protein resides in the cell membrane. Orphan receptor. The polypeptide is Probable G-protein coupled receptor 101 (GPR101) (Homo sapiens (Human)).